Reading from the N-terminus, the 81-residue chain is Cortexin-2 (81 aa).

The helical transmembrane segment at 29 to 49 (TGFAFVGILCIFLGLLIIRCF) threads the bilayer.

It belongs to the cortexin family.

It localises to the membrane. In Homo sapiens (Human), this protein is Cortexin-2 (CTXN2).